A 141-amino-acid chain; its full sequence is Large ribosomal subunit protein uL11 (141 aa).

It belongs to the universal ribosomal protein uL11 family. As to quaternary structure, part of the ribosomal stalk of the 50S ribosomal subunit. Interacts with L10 and the large rRNA to form the base of the stalk. L10 forms an elongated spine to which L12 dimers bind in a sequential fashion forming a multimeric L10(L12)X complex. In terms of processing, one or more lysine residues are methylated.

Functionally, forms part of the ribosomal stalk which helps the ribosome interact with GTP-bound translation factors. The sequence is that of Large ribosomal subunit protein uL11 from Synechococcus sp. (strain CC9311).